Consider the following 498-residue polypeptide: Glycerol kinase (498 aa).

Thr-11 contributes to the ADP binding site. 3 residues coordinate ATP: Thr-11, Ser-12, and Ser-13. Sn-glycerol 3-phosphate is bound at residue Thr-11. Arg-15 is an ADP binding site. Sn-glycerol 3-phosphate is bound by residues Arg-81, Glu-82, Tyr-133, and Asp-242. Residues Arg-81, Glu-82, Tyr-133, Asp-242, and Gln-243 each coordinate glycerol. The ADP site is built by Thr-264 and Gly-307. Thr-264, Gly-307, Gln-311, and Gly-408 together coordinate ATP. ADP contacts are provided by Gly-408 and Asn-412.

The protein belongs to the FGGY kinase family.

It carries out the reaction glycerol + ATP = sn-glycerol 3-phosphate + ADP + H(+). Its pathway is polyol metabolism; glycerol degradation via glycerol kinase pathway; sn-glycerol 3-phosphate from glycerol: step 1/1. With respect to regulation, inhibited by fructose 1,6-bisphosphate (FBP). Its function is as follows. Key enzyme in the regulation of glycerol uptake and metabolism. Catalyzes the phosphorylation of glycerol to yield sn-glycerol 3-phosphate. The chain is Glycerol kinase from Ralstonia pickettii (strain 12J).